A 277-amino-acid chain; its full sequence is Shikimate dehydrogenase (NADP(+)) (277 aa).

Residues 15–17 and Thr62 each bind shikimate; that span reads SLS. The Proton acceptor role is filled by Lys66. Shikimate is bound by residues Asn87 and Asp102. NADP(+)-binding positions include 127–131, 151–156, and Ile219; these read GAGGA and NRTVDK. Tyr221 lines the shikimate pocket. An NADP(+)-binding site is contributed by Gly242.

It belongs to the shikimate dehydrogenase family. In terms of assembly, homodimer.

It catalyses the reaction shikimate + NADP(+) = 3-dehydroshikimate + NADPH + H(+). It functions in the pathway metabolic intermediate biosynthesis; chorismate biosynthesis; chorismate from D-erythrose 4-phosphate and phosphoenolpyruvate: step 4/7. In terms of biological role, involved in the biosynthesis of the chorismate, which leads to the biosynthesis of aromatic amino acids. Catalyzes the reversible NADPH linked reduction of 3-dehydroshikimate (DHSA) to yield shikimate (SA). This Bacillus cereus (strain AH187) protein is Shikimate dehydrogenase (NADP(+)).